We begin with the raw amino-acid sequence, 85 residues long: U4-theraphotoxin-Hhn1a (85 aa).

The N-terminal stretch at 1–22 is a signal peptide; that stretch reads MKVTLIAILTCAAVLVLHTTAA. A propeptide spanning residues 23–48 is cleaved from the precursor; the sequence is EEFEAESQLMEVGMPDTELAAVDEER. Disulfide bonds link C52–C66, C56–C77, and C71–C82.

Belongs to the neurotoxin 12 (Hwtx-2) family. 02 (Hwtx-2) subfamily. As to quaternary structure, monomer. In terms of tissue distribution, expressed by the venom gland.

The protein resides in the secreted. Neurotoxin active on both insects and mammals. The protein is U4-theraphotoxin-Hhn1a of Cyriopagopus hainanus (Chinese bird spider).